The following is a 156-amino-acid chain: Deoxyuridine 5'-triphosphate nucleotidohydrolase (156 aa).

Residues 76–78 (RSG), N89, 93–95 (TVD), and K103 contribute to the substrate site.

Belongs to the dUTPase family. Mg(2+) serves as cofactor.

The enzyme catalyses dUTP + H2O = dUMP + diphosphate + H(+). Its pathway is pyrimidine metabolism; dUMP biosynthesis; dUMP from dCTP (dUTP route): step 2/2. In terms of biological role, this enzyme is involved in nucleotide metabolism: it produces dUMP, the immediate precursor of thymidine nucleotides and it decreases the intracellular concentration of dUTP so that uracil cannot be incorporated into DNA. The sequence is that of Deoxyuridine 5'-triphosphate nucleotidohydrolase from Rhizobium etli (strain CIAT 652).